Consider the following 170-residue polypeptide: Cathelicidin antimicrobial peptide (170 aa).

Residues M1 to A30 form the signal peptide. The propeptide at Q31–R131 is cathelin-like domain (CLD). Cystine bridges form between C86–C97 and C108–C125. The segment at F150 to R162 is active core.

Belongs to the cathelicidin family. In terms of assembly, monomer, homodimer or homotrimer (in vitro). Oligomerizes as tetra- or hexamer in solution (in vitro). The N-terminus is blocked. Post-translationally, proteolytically cleaved by proteinase PRTN3 into antibacterial peptide LL-37. Proteolytically cleaved by cathepsin CTSG and neutrophil elastase ELANE. In terms of processing, resistant to proteolytic degradation in solution, and when bound to both zwitterionic (mimicking mammalian membranes) and negatively charged membranes (mimicking bacterial membranes). After secretion onto the skin surface, the CAMP gene product is processed by a serine protease-dependent mechanism into multiple novel antimicrobial peptides distinct from and shorter than cathelicidin LL-37, such as peptides KR-20 (residues 151-170), LL-23 (residues 134-156), LL-29 (residues 134-162), KS-30 (residues 141-170), RK-31 (residues 140-170) and FF-33 (residues 138-170). The peptides act synergistically, killing bacteria at lower concentrations when present together, and maintain activity at increased salt condition. In terms of tissue distribution, expressed in neutrophilic granulocytes (at protein level). Expressed in bone marrow. Expressed in granulocytes (at protein level). Expressed by the eccrine apparatus and secreted into sweat on skin (at protein level). As to expression, expressed in bone marrow and testis.

It localises to the secreted. The protein resides in the vesicle. Functionally, antimicrobial protein that is an integral component of the innate immune system. Binds to bacterial lipopolysaccharides (LPS). Acts via neutrophil N-formyl peptide receptors to enhance the release of CXCL2. Postsecretory processing generates multiple cathelicidin antimicrobial peptides with various lengths which act as a topical antimicrobial defense in sweat on skin. The unprocessed precursor form, cathelicidin antimicrobial peptide, inhibits the growth of Gram-negative E.coli and E.aerogenes with efficiencies comparable to that of the mature peptide LL-37 (in vitro). Antimicrobial peptide that is an integral component of the innate immune system. Binds to bacterial lipopolysaccharides (LPS). Causes membrane permeabilization by forming transmembrane pores (in vitro). Causes lysis of E.coli. Exhibits antimicrobial activity against Gram-negative bacteria such as P.aeruginosa, S.typhimurium, E.aerogenes, E.coli and P.syringae, Gram-positive bacteria such as L.monocytogenes, S.epidermidis, S.pyogenes and S.aureus, as well as vancomycin-resistant enterococci (in vitro). Exhibits antimicrobial activity against methicillin-resistant S.aureus, P.mirabilis, and C.albicans in low-salt media, but not in media containing 100 mM NaCl (in vitro). Forms chiral supramolecular assemblies with quinolone signal (PQS) molecules of P.aeruginosa, which may lead to interference of bacterial quorum signaling and perturbance of bacterial biofilm formation. May form supramolecular fiber-like assemblies on bacterial membranes. Induces cytokine and chemokine production as well as TNF/TNFA and CSF2/GMCSF production in normal human keratinocytes. Exhibits hemolytic activity against red blood cells. In terms of biological role, exhibits antimicrobial activity against E.coli and B.megaterium (in vitro). Its function is as follows. Acts synergistically with peptides KS-30 and KR-31, killing bacteria such as S.aureus, E.coli and C.albicans at lower concentrations when present together, and maintains activity at increased salt condition. Does not have the ability to stimulate CXCL8/IL8 release from keratinocytes. Functionally, poorly active (MIC &gt; 150 uM) against E.coli strain K12. Is able to induce the pro-inflammatory cytokine TNF/TNFA or the chemokine CCL2/MCP1. Moderately antibacterial. In terms of biological role, moderately antibacterial. Acts synergistically with peptides KR-20 and KR-31, killing bacteria such as S.aureus, E.coli and C.albicans at lower concentrations when present together, and maintain activity at increased salt condition. Does not have the ability to stimulate CXCL8/IL8 release from keratinocytes. Its function is as follows. Acts synergistically with peptides KS-30 and KR-31, killing bacteria such as S.aureus, E.coli and C.albicans at lower concentrations when present together, and maintain activity at increased salt condition. Does not have the ability to stimulate CXCL8/IL8 release from keratinocytes. Functionally, inhibits the growth of E.coli and B.megaterium and exhibits hemolytic activity against human red blood cells. The protein is Cathelicidin antimicrobial peptide of Homo sapiens (Human).